We begin with the raw amino-acid sequence, 863 residues long: Penicillin-binding protein 1A (863 aa).

Over 1–28 the chain is Cytoplasmic; sequence MTENRDNKTSQSEKTTQKKKKKKFKAFK. Residues 29-49 traverse the membrane as a helical; Signal-anchor for type II membrane protein segment; it reads IILITFITLIVISLVTAIGIT. Residues 50-863 lie on the Extracellular side of the membrane; that stretch reads LAIIKTSPDI…KPIIRPKKHF (814 aa). Residues 71–248 form a transglycosylase region; sequence SKIYDDKGEL…PSVYYPYSRT (178 aa). Glu110 functions as the Proton donor; for transglycosylase activity in the catalytic mechanism. A transpeptidase region spans residues 392–674; that stretch reads ASAVLTDYHT…AAALFGKIMN (283 aa). Ser431 (acyl-ester intermediate; for transpeptidase activity) is an active-site residue. A disordered region spans residues 774–863; sequence DDDMYVLPDK…KPIIRPKKHF (90 aa). Positions 808–836 are enriched in polar residues; that stretch reads EDATNEASTEPSPNTDTVPEDSTNNLDPT. The span at 837–846 shows a compositional bias: basic and acidic residues; that stretch reads KNTEKKPSDK. The segment covering 847–863 has biased composition (basic residues); sequence KNKKHVIKPIIRPKKHF.

This sequence in the N-terminal section; belongs to the glycosyltransferase 51 family. The protein in the C-terminal section; belongs to the transpeptidase family.

Its subcellular location is the cell membrane. It carries out the reaction [GlcNAc-(1-&gt;4)-Mur2Ac(oyl-L-Ala-gamma-D-Glu-L-Lys-D-Ala-D-Ala)](n)-di-trans,octa-cis-undecaprenyl diphosphate + beta-D-GlcNAc-(1-&gt;4)-Mur2Ac(oyl-L-Ala-gamma-D-Glu-L-Lys-D-Ala-D-Ala)-di-trans,octa-cis-undecaprenyl diphosphate = [GlcNAc-(1-&gt;4)-Mur2Ac(oyl-L-Ala-gamma-D-Glu-L-Lys-D-Ala-D-Ala)](n+1)-di-trans,octa-cis-undecaprenyl diphosphate + di-trans,octa-cis-undecaprenyl diphosphate + H(+). The enzyme catalyses Preferential cleavage: (Ac)2-L-Lys-D-Ala-|-D-Ala. Also transpeptidation of peptidyl-alanyl moieties that are N-acyl substituents of D-alanine.. It functions in the pathway cell wall biogenesis; peptidoglycan biosynthesis. Functionally, cell wall formation. Synthesis of cross-linked peptidoglycan from the lipid intermediates. The enzyme has a penicillin-insensitive transglycosylase N-terminal domain (formation of linear glycan strands) and a penicillin-sensitive transpeptidase C-terminal domain (cross-linking of the peptide subunits). This is Penicillin-binding protein 1A (pbpA) from Clostridium novyi (strain NT).